We begin with the raw amino-acid sequence, 375 residues long: Alcohol dehydrogenase 1 (375 aa).

Alanine 1 bears the N-acetylalanine mark. Residues cysteine 46, histidine 68, cysteine 98, cysteine 101, cysteine 104, cysteine 112, and cysteine 175 each contribute to the Zn(2+) site. NAD(+) is bound by residues 200-205 (GLGGVG), aspartate 224, lysine 229, 293-295 (VGV), and arginine 370.

The protein belongs to the zinc-containing alcohol dehydrogenase family. Class-I subfamily. As to quaternary structure, homodimer. Zn(2+) is required as a cofactor.

The protein resides in the cytoplasm. It catalyses the reaction a primary alcohol + NAD(+) = an aldehyde + NADH + H(+). It carries out the reaction a secondary alcohol + NAD(+) = a ketone + NADH + H(+). The sequence is that of Alcohol dehydrogenase 1 from Columba livia (Rock dove).